The sequence spans 520 residues: Basal body-orientation factor 1 (520 aa).

A compositionally biased stretch (basic residues) spans 1–21; the sequence is MPKKKGKGKGKGKGKGKGKKD. The disordered stretch occupies residues 1–34; the sequence is MPKKKGKGKGKGKGKGKGKKDGKHDSKADRESEI. Residues 22 to 34 are compositionally biased toward basic and acidic residues; that stretch reads GKHDSKADRESEI. 2 coiled-coil regions span residues 27 to 175 and 245 to 386; these read KADR…REKM and VKEA…RQEA. A disordered region spans residues 468-492; the sequence is AHPPALSASSSEKIQVSSDAGSTVE. Residues 469 to 478 are compositionally biased toward low complexity; sequence HPPALSASSS. The segment covering 479-492 has biased composition (polar residues); that stretch reads EKIQVSSDAGSTVE.

Belongs to the BBOF1 family.

Its subcellular location is the cytoplasm. It is found in the cytoskeleton. The protein resides in the cilium basal body. In terms of biological role, basal body protein required in multiciliate cells to align and maintain cilia orientation in response to flow. May act by mediating a maturation step that stabilizes and aligns cilia orientation. Not required to respond to planar cell polarity (PCP) or flow-based orientation cues. In Danio rerio (Zebrafish), this protein is Basal body-orientation factor 1.